Consider the following 189-residue polypeptide: Ribosome hibernation promotion factor (189 aa).

This sequence belongs to the HPF/YfiA ribosome-associated protein family. Long HPF subfamily. Interacts with 100S ribosomes. Not associated with 70S ribosome monomers, about 1 monomer per ribosome.

The protein localises to the cytoplasm. Functionally, required for dimerization of active 70S ribosomes into 100S ribosomes in stationary phase; 100S ribosomes are translationally inactive and sometimes present during exponential growth. May not be the only factor implicated. Might negatively regulate the activity of the sigma-54 factor (SigL). The chain is Ribosome hibernation promotion factor (yvyD) from Bacillus subtilis (strain 168).